The chain runs to 103 residues: UPF0102 protein aq_041 (103 aa).

It belongs to the UPF0102 family.

The polypeptide is UPF0102 protein aq_041 (Aquifex aeolicus (strain VF5)).